We begin with the raw amino-acid sequence, 451 residues long: Prenyltransferase anuH (451 aa).

Residues R105, K189, Y191, K257, Y259, and Y422 each coordinate dimethylallyl diphosphate.

This sequence belongs to the tryptophan dimethylallyltransferase family.

It catalyses the reaction (8S)-annullatin E + dimethylallyl diphosphate = (8S)-annullatin J + diphosphate. The protein operates within secondary metabolite biosynthesis. Functionally, cytochrome P450 monooxygenase; part of the gene cluster that mediates the biosynthesis of annullatin D, an alkylated aromatic polyketide with a fused dihydrobenzofuran lactone ring system that exhibits potent agonistic activities toward the cannabinoid receptors. Within the pathway, anuH uses dimethylallyl diphosphate (DMAPP) to prenylate (8S)-annullatin E to produce (8S)-annullatin J. Geranyl and farnesyl diphosphate are not consumed by anuH for prenylation. 2-hydroxymethyl-3-pentylphenol, without the hydroxyl group at the side chain, is also accepted by anuH, but only with low conversion yield. The annullatin backbone 2-hydroxymethyl-3-pentylphenol is assembled from one acetyl-CoA starter unit and 5 malonyl-CoA elongation units by cooperation of the highly reducing polyketide synthase anuA, the short-chain dehydrogenase anuB and the oxidoreductase anuC, before being hydroxylated at the C-5 alkyl chain by the cytochrome P450 monooxygenase anuE to form (8S)-annullatin E. The prenyltransferase anuH subsequently installs one isoprenyl group at the benzene ring to form (8S)-annullatin J. Enzymatic or nonenzymatic dihydro-benzofuran ring formation between the prenyl and the phenolic hydroxyl groups in (8S)-annullatin J results in two diastereomers (2S,9S)-annullatin H and compound 12. The intermediate (2S,9S)-annullatin H is then converted to (2S,9S)-annullatin D by the FAD-linked oxidoreductase anuG-catalyzed five-member lactone ring formation. The isomer 12 acts as a substrate for the short-chain dehydrogenase anuF and is oxidized to (2R)-annullatin F, which is subsequently acetylated by an acetyltransferase leading to (2R)-annullatin G formation. The remaining enzymes identified within the cluster, anuD, anuI and anuJ, seem not to be involved in annullatin biosynthesis. The sequence is that of Prenyltransferase anuH from Penicillium roqueforti (strain FM164).